The chain runs to 399 residues: Subtilisin-like protease 4 (399 aa).

An N-terminal signal peptide occupies residues 1-19; the sequence is MVCLKTLSVFLAAFAAADA. A propeptide spanning residues 20–118 is cleaved from the precursor; it reads RAVFKTQGHK…VEQDQVVRIS (99 aa). The region spanning 38 to 117 is the Inhibitor I9 domain; the sequence is YIVVMKDGVS…YVEQDQVVRI (80 aa). A glycan (N-linked (GlcNAc...) asparagine) is linked at Asn-102. A Peptidase S8 domain is found at 128-399; it reads SWGLGRVSHR…NRLLYNGSGQ (272 aa). Residues Asp-160 and His-191 each act as charge relay system in the active site. N-linked (GlcNAc...) asparagine glycosylation is found at Asn-252 and Asn-308. The active-site Charge relay system is Ser-346. N-linked (GlcNAc...) asparagine glycosylation is present at Asn-395.

The protein belongs to the peptidase S8 family.

The protein localises to the secreted. Its function is as follows. Secreted subtilisin-like serine protease with keratinolytic activity that contributes to pathogenicity. The polypeptide is Subtilisin-like protease 4 (SUB4) (Trichophyton tonsurans (Scalp ringworm fungus)).